The primary structure comprises 282 residues: MSSYENHQALDGLTLGKSTDYRDNYDASLLQGVPRSLNRDPLGLTADNLPFHGADIWTLYELSWLNSQGLPQVAVGHVELDYTSVNLIESKSFKLYLNSFNQTRFDTWETVRQTLERDLRACAQGSVSVRLHRLDELEGQPVAHFHGTCIDDQDISIDNYQFTTDYLQHAVSGEKQVEETLVSHLLKSNCLITHQPDWGSIQIQYRGRKIDREKLLRYLVSFRHHNEFHEQCVERIFNDILRFCQPETLSVYARYTRRGGLDINPWRSNTDFVPATGRLARQ.

A substrate-binding site is contributed by 88 to 90 (IES). 90–91 (SK) provides a ligand contact to NADPH. The Thioimide intermediate role is filled by C190. Residue D197 is the Proton donor of the active site. Residue 229–230 (HE) participates in substrate binding. Residue 258–259 (RG) participates in NADPH binding.

The protein belongs to the GTP cyclohydrolase I family. QueF type 2 subfamily. As to quaternary structure, homodimer.

The protein localises to the cytoplasm. The catalysed reaction is 7-aminomethyl-7-carbaguanine + 2 NADP(+) = 7-cyano-7-deazaguanine + 2 NADPH + 3 H(+). It functions in the pathway tRNA modification; tRNA-queuosine biosynthesis. Its function is as follows. Catalyzes the NADPH-dependent reduction of 7-cyano-7-deazaguanine (preQ0) to 7-aminomethyl-7-deazaguanine (preQ1). The polypeptide is NADPH-dependent 7-cyano-7-deazaguanine reductase (Salmonella paratyphi B (strain ATCC BAA-1250 / SPB7)).